The primary structure comprises 418 residues: MDRLRIVGGRRLEGAVTISGAKNAALPQIAAALLSPYPLELTNLPDVTDVENMLGVVRLHGAEVTRSAHAATIDTSAAVSKETSYDTVRKMRATVLVLAPLLARFGHARVSLPGGCAIGARPVDMHVAALAALGAKIAIENGLIVASAPNGLTGTRIVLSSPSVGATETAMMAATTAKGETEILNAAREPEVADLAACLNAMGARIEGAGTHRILIAGDTGWHAARHDIIPDRIEAGTYAIAAAITGGQLELTHARLEHMASVVQLLEATGVSVWPGDRGLIVSRERPLKAADLTTEPYPGFPTDLQAQFMALMCCAEGASLLRETIFENRFMHVPELMRLGANIKLQGTMALVRGGEKLHGAQVMATDLRASVSLVLAALVSEGETIINRVYHLDRGYEQLDRKLRLCGADIERLSA.

Phosphoenolpyruvate is bound at residue 22-23; that stretch reads KN. R92 serves as a coordination point for UDP-N-acetyl-alpha-D-glucosamine. C116 serves as the catalytic Proton donor. C116 carries the post-translational modification 2-(S-cysteinyl)pyruvic acid O-phosphothioketal. The UDP-N-acetyl-alpha-D-glucosamine site is built by D305 and I327.

This sequence belongs to the EPSP synthase family. MurA subfamily.

The protein localises to the cytoplasm. It carries out the reaction phosphoenolpyruvate + UDP-N-acetyl-alpha-D-glucosamine = UDP-N-acetyl-3-O-(1-carboxyvinyl)-alpha-D-glucosamine + phosphate. It functions in the pathway cell wall biogenesis; peptidoglycan biosynthesis. Its function is as follows. Cell wall formation. Adds enolpyruvyl to UDP-N-acetylglucosamine. The sequence is that of UDP-N-acetylglucosamine 1-carboxyvinyltransferase 2 from Mesorhizobium japonicum (strain LMG 29417 / CECT 9101 / MAFF 303099) (Mesorhizobium loti (strain MAFF 303099)).